The sequence spans 388 residues: Galactokinase (388 aa).

33–36 (EHTD) contacts substrate. ATP contacts are provided by residues Ser-67 and 124–130 (GSGLSSS). 2 residues coordinate Mg(2+): Ser-130 and Glu-162. The active-site Proton acceptor is Asp-174. Tyr-224 contributes to the substrate binding site.

This sequence belongs to the GHMP kinase family. GalK subfamily.

It is found in the cytoplasm. It carries out the reaction alpha-D-galactose + ATP = alpha-D-galactose 1-phosphate + ADP + H(+). It functions in the pathway carbohydrate metabolism; galactose metabolism. Catalyzes the transfer of the gamma-phosphate of ATP to D-galactose to form alpha-D-galactose-1-phosphate (Gal-1-P). This Streptococcus thermophilus (strain ATCC BAA-491 / LMD-9) protein is Galactokinase.